The sequence spans 92 residues: MPNTKSAEKHQRKSQRKRIFNLRAKKELKEQIKQLKDLIEAKKKQEALAFFPKIQSLLDRLVKRKKLVANNANRKKRRLLEKIEKITGDGIS.

This sequence belongs to the bacterial ribosomal protein bS20 family.

Functionally, binds directly to 16S ribosomal RNA. This is Small ribosomal subunit protein bS20 from Methylacidiphilum infernorum (isolate V4) (Methylokorus infernorum (strain V4)).